Reading from the N-terminus, the 237-residue chain is Ribosomal RNA small subunit methyltransferase G (237 aa).

S-adenosyl-L-methionine-binding positions include G75, F80, 127 to 128 (AE), and R146.

Belongs to the methyltransferase superfamily. RNA methyltransferase RsmG family.

The protein resides in the cytoplasm. Functionally, specifically methylates the N7 position of a guanine in 16S rRNA. In Synechococcus sp. (strain RCC307), this protein is Ribosomal RNA small subunit methyltransferase G.